The chain runs to 320 residues: tRNA uridine(34) hydroxylase (320 aa).

The Rhodanese domain occupies 123 to 217; that stretch reads EDEDTVILDA…YGKDPETKGQ (95 aa). The active-site Cysteine persulfide intermediate is the cysteine 177.

The protein belongs to the TrhO family.

It carries out the reaction uridine(34) in tRNA + AH2 + O2 = 5-hydroxyuridine(34) in tRNA + A + H2O. Functionally, catalyzes oxygen-dependent 5-hydroxyuridine (ho5U) modification at position 34 in tRNAs. The chain is tRNA uridine(34) hydroxylase from Staphylococcus haemolyticus (strain JCSC1435).